Consider the following 502-residue polypeptide: RNA-splicing ligase RtcB homolog 2 (502 aa).

Asp120, Cys123, His228, His260, and His354 together coordinate Mn(2+). 227 to 231 serves as a coordination point for GMP; it reads NHYAE. GMP contacts are provided by residues 354-355, 403-406, Ser410, and 429-432; these read HN, GGSM, and HGAG. His429 acts as the GMP-histidine intermediate in catalysis.

This sequence belongs to the RtcB family. Catalytic component of the tRNA-splicing ligase complex. It depends on Mn(2+) as a cofactor.

It catalyses the reaction a 3'-end 3'-phospho-ribonucleotide-RNA + a 5'-end dephospho-ribonucleoside-RNA + GTP = a ribonucleotidyl-ribonucleotide-RNA + GMP + diphosphate. The enzyme catalyses a 3'-end 2',3'-cyclophospho-ribonucleotide-RNA + a 5'-end dephospho-ribonucleoside-RNA + GTP + H2O = a ribonucleotidyl-ribonucleotide-RNA + GMP + diphosphate + H(+). Its function is as follows. Catalytic subunit of the tRNA-splicing ligase complex that acts by directly joining spliced tRNA halves to mature-sized tRNAs by incorporating the precursor-derived splice junction phosphate into the mature tRNA as a canonical 3',5'-phosphodiester. May act as an RNA ligase with broad substrate specificity, and may function toward other RNAs. In Culex quinquefasciatus (Southern house mosquito), this protein is RNA-splicing ligase RtcB homolog 2.